The sequence spans 88 residues: UPF0297 protein SSU98_0066 (88 aa).

This sequence belongs to the UPF0297 family.

This chain is UPF0297 protein SSU98_0066, found in Streptococcus suis (strain 98HAH33).